Reading from the N-terminus, the 109-residue chain is T cell receptor alpha variable 26-2 (109 aa).

Residues 1–19 form the signal peptide; it reads MKLVTSITVLLSLGIMGDA. The Ig-like domain maps to 20-109; it reads KTTQPNSMES…AAVYYCILRD (90 aa). A disulfide bond links cysteine 39 and cysteine 105. A glycan (N-linked (GlcNAc...) asparagine) is linked at asparagine 40.

In terms of assembly, alpha-beta TR is a heterodimer composed of an alpha and beta chain; disulfide-linked. The alpha-beta TR is associated with the transmembrane signaling CD3 coreceptor proteins to form the TR-CD3 (TcR or TCR). The assembly of alpha-beta TR heterodimers with CD3 occurs in the endoplasmic reticulum where a single alpha-beta TR heterodimer associates with one CD3D-CD3E heterodimer, one CD3G-CD3E heterodimer and one CD247 homodimer forming a stable octameric structure. CD3D-CD3E and CD3G-CD3E heterodimers preferentially associate with TR alpha and TR beta chains, respectively. The association of the CD247 homodimer is the last step of TcR assembly in the endoplasmic reticulum and is required for transport to the cell surface.

It is found in the cell membrane. Its function is as follows. V region of the variable domain of T cell receptor (TR) alpha chain that participates in the antigen recognition. Alpha-beta T cell receptors are antigen specific receptors which are essential to the immune response and are present on the cell surface of T lymphocytes. Recognize peptide-major histocompatibility (MH) (pMH) complexes that are displayed by antigen presenting cells (APC), a prerequisite for efficient T cell adaptive immunity against pathogens. Binding of alpha-beta TR to pMH complex initiates TR-CD3 clustering on the cell surface and intracellular activation of LCK that phosphorylates the ITAM motifs of CD3G, CD3D, CD3E and CD247 enabling the recruitment of ZAP70. In turn ZAP70 phosphorylates LAT, which recruits numerous signaling molecules to form the LAT signalosome. The LAT signalosome propagates signal branching to three major signaling pathways, the calcium, the mitogen-activated protein kinase (MAPK) kinase and the nuclear factor NF-kappa-B (NF-kB) pathways, leading to the mobilization of transcription factors that are critical for gene expression and essential for T cell growth and differentiation. The T cell repertoire is generated in the thymus, by V-(D)-J rearrangement. This repertoire is then shaped by intrathymic selection events to generate a peripheral T cell pool of self-MH restricted, non-autoaggressive T cells. Post-thymic interaction of alpha-beta TR with the pMH complexes shapes TR structural and functional avidity. The protein is T cell receptor alpha variable 26-2 of Homo sapiens (Human).